The following is a 378-amino-acid chain: Pulmonary surfactant-associated protein D (378 aa).

An N-terminal signal peptide occupies residues 1–20 (MLLLPLSVLILLTQPPRSLG). S-nitrosocysteine is present on residues cysteine 35 and cysteine 40. The tract at residues 43-221 (MENGLPGRDG…ERGAKGESGL (179 aa)) is disordered. Residues 46–222 (GLPGRDGRDG…RGAKGESGLP (177 aa)) form the Collagen-like domain. The span at 50 to 65 (RDGRDGREGPRGEKGD) shows a compositional bias: basic and acidic residues. A 4-hydroxyproline modification is found at proline 78. Residue lysine 87 is modified to 5-hydroxylysine. An N-linked (GlcNAc...) asparagine glycan is attached at asparagine 90. Proline 96 bears the 4-hydroxyproline mark. At lysine 99 the chain carries 5-hydroxylysine. A compositionally biased stretch (pro residues) spans 105-114 (CGPPGPPGIP). Residues 137 to 146 (PKGETGPKGE) are compositionally biased toward low complexity. 4-hydroxyproline is present on residues proline 171 and proline 177. Over residues 173-197 (ERGAPGSAGAAGPAGATGPQGPSGA) the composition is skewed to low complexity. Over residues 204–216 (KGDRGPPGERGAK) the composition is skewed to basic and acidic residues. The stretch at 223 to 254 (GITALRQQVETLQGQVQRLQKAFSQYKKVELF) forms a coiled coil. Residues 260-378 (VGEKIFKTGG…GELRLVICEF (119 aa)) form the C-type lectin domain. 2 disulfides stabilise this stretch: cysteine 281-cysteine 376 and cysteine 354-cysteine 368. Asparagine 323 carries N-linked (GlcNAc...) asparagine glycosylation.

Belongs to the SFTPD family. Oligomeric complex of 4 set of homotrimers. Hydroxylation on proline residues within the sequence motif, GXPG, is most likely to be 4-hydroxy as this fits the requirement for 4-hydroxylation in vertebrates. In terms of processing, S-nitrosylation at Cys-35 and Cys-40 alters the quaternary structure which results in a pro-inflammatory chemoattractive signaling activity with macrophages.

The protein localises to the secreted. Its subcellular location is the extracellular space. It is found in the extracellular matrix. It localises to the surface film. Functionally, contributes to the lung's defense against inhaled microorganisms, organic antigens and toxins. Interacts with compounds such as bacterial lipopolysaccharides, oligosaccharides and fatty acids and modulates leukocyte action in immune response. May participate in the extracellular reorganization or turnover of pulmonary surfactant. Binds strongly maltose residues and to a lesser extent other alpha-glucosyl moieties. The polypeptide is Pulmonary surfactant-associated protein D (SFTPD) (Sus scrofa (Pig)).